A 362-amino-acid chain; its full sequence is Homeobox protein Nkx-2.3 (362 aa).

Disordered stretches follow at residues 126–149 (EAAG…RKPR) and 203–222 (QRQD…PPRR). Residues 132–141 (KTSEDGERPK) show a composition bias toward basic and acidic residues. The homeobox DNA-binding region spans 145-204 (RRKPRVLFSQAQVFELERRFKQQRYLSAPEREHLASSLKLTSTQVKIWFQNRRYKCKRQR).

This sequence belongs to the NK-2 homeobox family. As to expression, expressed in spleen and intestine. Also expressed in salivary gland and tongue.

It localises to the nucleus. In terms of biological role, transcriptional regulator essential for normal development and functions of the small intestine and spleen. Activates directly MADCAM1 expression. Required for homing of lymphocytes in spleen and mucosa-associated lymphoid tissue. May have a role during pharyngeal organogenesis. This chain is Homeobox protein Nkx-2.3 (Nkx2-3), found in Mus musculus (Mouse).